The chain runs to 544 residues: uncharacterized protein (544 aa).

The next 14 membrane-spanning stretches (helical) occupy residues 31–51 (ILVFYLLFFLTDVAGIPAALA), 52–72 (GSVLMIGKIFDAINDPIIGLL), 84–104 (LPWMLGGMIPFALFYTAQWLI), 116–136 (WGLFIYYVAIAMAFNLCYTTV), 162–182 (FAFSIGGSILSLILYILIAAG), 191–211 (FGELGVMISVLSISALLWSAL), 230–250 (LAPLLMAAGITLILLAIAKSF), 257–277 (GFDYISFFLILLGLIWGGFGF), 318–338 (FLFVIGIYLCSWLAVQLTASI), 356–376 (TIALAVQGTALVMLFVWQALA), 383–403 (VIYFLGSMVWMGAEAGLWLVQ), 407–427 (VALLYTLAIFAGVGVSVAYLI), 450–470 (FFYAFMVLLQKVGLALGLFLV), and 501–521 (FAVAPLPAFFLLGGLILAIFY).

Belongs to the sodium:galactoside symporter (TC 2.A.2) family.

The protein localises to the cell membrane. This is an uncharacterized protein from Synechocystis sp. (strain ATCC 27184 / PCC 6803 / Kazusa).